The chain runs to 1028 residues: U2 snRNP-associated SURP motif-containing protein (1028 aa).

Disordered stretches follow at residues 1–111 and 141–272; these read MADK…EDEK and VNAA…DPST. Position 2 is an N-acetylalanine (Ala-2). The span at 7 to 16 shows a compositional bias: polar residues; the sequence is GGSQKASSKT. Positions 45–54 are enriched in basic residues; sequence TRPKSPRKHN. Over residues 55-64 the composition is skewed to basic and acidic residues; it reads YRNESARESL. Ser-67 is modified (phosphoserine). Residue Lys-80 forms a Glycyl lysine isopeptide (Lys-Gly) (interchain with G-Cter in SUMO2) linkage. Positions 92 to 121 form a coiled coil; the sequence is AKRTLSKKEQEELKKKEDEKAAAEIYEEFL. Basic and acidic residues-rich tracts occupy residues 97 to 111 and 144 to 155; these read SKKE…EDEK and AKEEHETDEKRG. Glycyl lysine isopeptide (Lys-Gly) (interchain with G-Cter in SUMO2) cross-links involve residues Lys-145 and Lys-168. Over residues 169–178 the composition is skewed to polar residues; that stretch reads NPPNQSSNER. Positions 186–222 are enriched in basic and acidic residues; that stretch reads ETKKPPLKKGEKEKKKSNLELFKEELKQIQEERDERH. Residues 192 to 232 adopt a coiled-coil conformation; sequence LKKGEKEKKKSNLELFKEELKQIQEERDERHKTKGRLSRFE. Ser-202 is subject to Phosphoserine. A Glycyl lysine isopeptide (Lys-Gly) (interchain with G-Cter in SUMO2) cross-link involves residue Lys-208. At Ser-236 the chain carries Phosphoserine. Over residues 239 to 249 the composition is skewed to basic and acidic residues; that stretch reads DGQRRSMDAPS. The RRM domain occupies 273 to 354; sequence TNLYLGNINP…FEMKLGWGKA (82 aa). An SURP motif repeat occupies 429–472; that stretch reads LIHRMIEFVVREGPMFEAMIMNREINNPMFRFLFENQTPAHVYY. Ser-484 is subject to Phosphoserine. A CID domain is found at 533–678; the sequence is LKEEQRDKLE…KLQNIFLGLV (146 aa). Thr-718 is subject to Phosphothreonine. Glycyl lysine isopeptide (Lys-Gly) (interchain with G-Cter in SUMO2) cross-links involve residues Lys-747 and Lys-748. N6-acetyllysine; alternate is present on Lys-759. Residue Lys-759 forms a Glycyl lysine isopeptide (Lys-Gly) (interchain with G-Cter in SUMO2); alternate linkage. 2 disordered regions span residues 777-840 and 854-1028; these read KWEL…EEKR and QDEL…KNKH. Residues 779-809 are a coiled coil; that stretch reads ELFDQHEESEEEENQNQEEESEDEEDTQSSK. Acidic residues predominate over residues 785–805; the sequence is EESEEEENQNQEEESEDEEDT. Ser-787, Ser-799, and Ser-810 each carry phosphoserine. Composition is skewed to basic and acidic residues over residues 809 to 840 and 873 to 921; these read KSEE…EEKR and QVEH…TPTR. Glycyl lysine isopeptide (Lys-Gly) (interchain with G-Cter in SUMO2) cross-links involve residues Lys-821, Lys-828, and Lys-831. A coiled-coil region spans residues 836–914; sequence SEEKRAKLRE…ESRSKDEKEK (79 aa). Phosphothreonine is present on Thr-930. A phosphoserine mark is found at Ser-945 and Ser-947. The segment covering 949-979 has biased composition (basic and acidic residues); sequence KSERSERSERSHKESSRSRSSHKDSPRDVSK. Residues 990–1028 are compositionally biased toward basic residues; that stretch reads TPKRSRRSRSRSPKKSGKKSRSQSRSPHRSHKKSKKNKH.

Belongs to the splicing factor SR family. As to quaternary structure, interacts with ERBB4.

Its subcellular location is the nucleus. The protein is U2 snRNP-associated SURP motif-containing protein (U2SURP) of Pongo abelii (Sumatran orangutan).